The chain runs to 284 residues: 2-dehydro-3-deoxyphosphooctonate aldolase (284 aa).

The protein belongs to the KdsA family.

The protein localises to the cytoplasm. It catalyses the reaction D-arabinose 5-phosphate + phosphoenolpyruvate + H2O = 3-deoxy-alpha-D-manno-2-octulosonate-8-phosphate + phosphate. It participates in carbohydrate biosynthesis; 3-deoxy-D-manno-octulosonate biosynthesis; 3-deoxy-D-manno-octulosonate from D-ribulose 5-phosphate: step 2/3. Its pathway is bacterial outer membrane biogenesis; lipopolysaccharide biosynthesis. In Mannheimia succiniciproducens (strain KCTC 0769BP / MBEL55E), this protein is 2-dehydro-3-deoxyphosphooctonate aldolase.